We begin with the raw amino-acid sequence, 226 residues long: Putative mitochondrial outer membrane protein porin 5 (226 aa).

Belongs to the eukaryotic mitochondrial porin (TC 1.B.8.1) family.

It localises to the mitochondrion outer membrane. Functionally, putative channel that allows diffusion of small hydrophilic molecules through membranes. In Arabidopsis thaliana (Mouse-ear cress), this protein is Putative mitochondrial outer membrane protein porin 5 (VDAC5).